The chain runs to 142 residues: Large ribosomal subunit protein uL11 (142 aa).

Belongs to the universal ribosomal protein uL11 family. As to quaternary structure, part of the ribosomal stalk of the 50S ribosomal subunit. Interacts with L10 and the large rRNA to form the base of the stalk. L10 forms an elongated spine to which L12 dimers bind in a sequential fashion forming a multimeric L10(L12)X complex. Post-translationally, one or more lysine residues are methylated.

Functionally, forms part of the ribosomal stalk which helps the ribosome interact with GTP-bound translation factors. The polypeptide is Large ribosomal subunit protein uL11 (Stenotrophomonas maltophilia (strain R551-3)).